An 814-amino-acid chain; its full sequence is Immunoglobulin superfamily DCC subclass member 3 (814 aa).

Residues 1-35 (MAVQRAASPRRPPAPLWPRLLLPLLLLLLPAPSEG) form the signal peptide. Ig-like C2-type domains are found at residues 36 to 139 (LGHS…ATMS), 140 to 220 (DFHV…IRIS), 238 to 321 (PAIL…RTAQ), and 329 to 416 (PAEF…ARLT). 2 disulfide bridges follow: Cys63-Cys117 and Cys160-Cys209. Asn93 carries an N-linked (GlcNAc...) asparagine glycan. The N-linked (GlcNAc...) asparagine glycan is linked to Asn246. 2 disulfide bridges follow: Cys259/Cys307 and Cys351/Cys400. 2 N-linked (GlcNAc...) asparagine glycosylation sites follow: Asn381 and Asn382. Fibronectin type-III domains follow at residues 426–520 (PPRN…TLGE) and 523–618 (APPP…ASER). 3 N-linked (GlcNAc...) asparagine glycosylation sites follow: Asn580, Asn604, and Asn634. The chain crosses the membrane as a helical span at residues 641–661 (IVIGIHIGVTCIIFCVLFLLF). 2 disordered regions span residues 722–743 (PPAS…APAP) and 762–814 (GKTT…HSEQ). A compositionally biased stretch (low complexity) spans 770 to 781 (TEATAPCAGLAA).

Belongs to the immunoglobulin superfamily. DCC family.

It localises to the membrane. The chain is Immunoglobulin superfamily DCC subclass member 3 (IGDCC3) from Homo sapiens (Human).